A 230-amino-acid chain; its full sequence is PsbP-like protein 1, chloroplastic (230 aa).

The protein belongs to the PsbP family.

It localises to the plastid. Its subcellular location is the chloroplast thylakoid lumen. In terms of biological role, required for efficient repair of photodamaged PSII, but not tightly associated with the complex. The protein is PsbP-like protein 1, chloroplastic (PPL1) of Arabidopsis thaliana (Mouse-ear cress).